We begin with the raw amino-acid sequence, 371 residues long: Spermatogenic leucine zipper protein 1 (371 aa).

2 coiled-coil regions span residues 96 to 148 and 177 to 289; these read EVSE…TVQD and FPHI…QKEE. The residue at position 98 (Ser98) is a Phosphoserine. Positions 110–120 are helix-loop-helix motif; that stretch reads INKELVKKLLA. Residues 121 to 188 are basic motif; that stretch reads SLDLGKKENA…HIQEENIRLR (68 aa). Position 202 is a phosphoserine (Ser202). The segment covering 223–240 has biased composition (polar residues); it reads KTLKNNGTHSPTQTNNES. Residues 223–246 are disordered; sequence KTLKNNGTHSPTQTNNESAKQELE. The interval 245-266 is leucine-zipper; the sequence is LEEQVKRLKEDTYSLHLIATLL.

Phosphorylated by MAPK1/ERK2 and MAPK3/ERK1.

It is found in the cytoplasm. The protein localises to the nucleus. Functionally, transcription factor that binds to the DNA sequence 5'-CANNTG-3'(E box) and the G-box motif. May play an important role in the regulation of cell proliferation and differentiation during spermatogenesis. The polypeptide is Spermatogenic leucine zipper protein 1 (SPZ1) (Bos taurus (Bovine)).